The chain runs to 372 residues: MHC class I-like protein MILL2 (372 aa).

An N-terminal signal peptide occupies residues 1–26 (MEASSGTAGPAVLLLILALLLTESQG). An alpha-1 region spans residues 28–119 (RSQGTHTLRY…MINQKGHDKG (92 aa)). 3 disulfides stabilise this stretch: Cys-78-Cys-89, Cys-129-Cys-191, and Cys-230-Cys-287. Positions 120–210 (PYTLQATLDC…SLSNVLPDTG (91 aa)) are alpha-2. N-linked (GlcNAc...) asparagine glycosylation is found at Asn-134, Asn-234, and Asn-293. The region spanning 192-302 (PARLQRHLAS…NRTIMQTAVS (111 aa)) is the Ig-like C1-type domain. The tract at residues 211–339 (SPVVIVTCRN…VVDGGLVTGN (129 aa)) is alpha-3. Positions 308-349 (WPSASWATRQEAEGPHRTHNDHVVDGGLVTGNANKDSPDASS) are disordered. Residues 317 to 331 (QEAEGPHRTHNDHVV) show a composition bias toward basic and acidic residues. Residues 340–348 (ANKDSPDAS) form a connecting peptide region. The GPI-anchor amidated serine moiety is linked to residue Ser-349. Residues 350–372 (CATASAISAFPVVVLSVALPRAN) constitute a propeptide, removed in mature form.

This sequence belongs to the MHC class I family. In terms of assembly, heterodimer with B2M. As to expression, ubiquitously expressed in neonatal and adult tissues.

The protein localises to the cell membrane. Binds to heparan sulfate proteoglycans on the surface of fibroblast cells. The protein is MHC class I-like protein MILL2 of Rattus norvegicus (Rat).